The chain runs to 90 residues: 10 kDa anti-sigma factor (90 aa).

Interacts with the host sigma factor RpoD, and thereby inhibits its interaction with the catalytic core of the host RNA polymerase.

Functionally, transcriptional inhibitor. Inhibits sigma 70-directed transcription by weakening its interaction with the core of the host's RNA polymerase. This allows Gp55 to successfully compete for the core enzyme. Plays an important role during the prereplicative period of phage T4 development. The protein is 10 kDa anti-sigma factor (asiA) of Enterobacteria phage T4 (Bacteriophage T4).